A 218-amino-acid chain; its full sequence is Ras-related protein Rab-27B (218 aa).

The residue at position 2 (Thr2) is an N-acetylthreonine. 16–24 (GDSGVGKTT) is a binding site for GTP. Residues 38–46 (FITTVGIDF) carry the Effector region motif. GTP is bound by residues 74–78 (DTAGQ), 133–136 (NKAD), and 163–165 (SAA). A disulfide bridge connects residues Cys123 and Cys188. S-geranylgeranyl cysteine attachment occurs at residues Cys216 and Cys218. Position 218 is a cysteine methyl ester (Cys218).

The protein belongs to the small GTPase superfamily. Rab family. In terms of assembly, interacts with SYTL2, SYTL4, MYRIP and MLPH. Interacts with RPH3A and RPH3A. Interacts (GDP-bound form preferentially) with DENND10.

It is found in the membrane. The protein resides in the late endosome. The catalysed reaction is GTP + H2O = GDP + phosphate + H(+). Its activity is regulated as follows. Regulated by guanine nucleotide exchange factors (GEFs) which promote the exchange of bound GDP for free GTP, GTPase activating proteins (GAPs) which increase the GTP hydrolysis activity, and GDP dissociation inhibitors which inhibit the dissociation of the nucleotide from the GTPase. Activated by GEFs such as DENND10. Small GTPase which cycles between active GTP-bound and inactive GDP-bound states. In its active state, binds to a variety of effector proteins to regulate homeostasis of late endocytic pathway, including endosomal positioning, maturation and secretion. Plays a role in NTRK2/TRKB axonal anterograde transport by facilitating the association of NTRK2/TRKB with KLC1. May be involved in targeting uroplakins to urothelial apical membranes. This Rattus norvegicus (Rat) protein is Ras-related protein Rab-27B (Rab27b).